We begin with the raw amino-acid sequence, 127 residues long: Protein ApaG (127 aa).

One can recognise an ApaG domain in the interval 3 to 127 (KDKRYAFSVK…FQLNMPRVLH (125 aa)).

This is Protein ApaG from Methylobacillus flagellatus (strain ATCC 51484 / DSM 6875 / VKM B-1610 / KT).